The primary structure comprises 213 residues: Protein brother (213 aa).

The tract at residues 189–213 (HTPQTPPEDHHHRGGPGLPRGPMGW) is disordered. A compositionally biased stretch (gly residues) spans 203-213 (GPGLPRGPMGW).

The protein belongs to the CBF-beta family.

It is found in the nucleus. Functionally, regulates the DNA-binding properties of Runt. In Drosophila melanogaster (Fruit fly), this protein is Protein brother (Bro).